A 427-amino-acid chain; its full sequence is 3-phosphoshikimate 1-carboxyvinyltransferase (427 aa).

K20, S21, and R25 together coordinate 3-phosphoshikimate. K20 is a phosphoenolpyruvate binding site. Residues G92 and R120 each coordinate phosphoenolpyruvate. Residues S166, Q168, D312, and K339 each coordinate 3-phosphoshikimate. Residue Q168 coordinates phosphoenolpyruvate. The active-site Proton acceptor is the D312. The phosphoenolpyruvate site is built by R343 and R385.

The protein belongs to the EPSP synthase family. In terms of assembly, monomer.

It is found in the cytoplasm. The catalysed reaction is 3-phosphoshikimate + phosphoenolpyruvate = 5-O-(1-carboxyvinyl)-3-phosphoshikimate + phosphate. Its pathway is metabolic intermediate biosynthesis; chorismate biosynthesis; chorismate from D-erythrose 4-phosphate and phosphoenolpyruvate: step 6/7. Its function is as follows. Catalyzes the transfer of the enolpyruvyl moiety of phosphoenolpyruvate (PEP) to the 5-hydroxyl of shikimate-3-phosphate (S3P) to produce enolpyruvyl shikimate-3-phosphate and inorganic phosphate. The protein is 3-phosphoshikimate 1-carboxyvinyltransferase of Streptococcus pneumoniae serotype 2 (strain D39 / NCTC 7466).